The sequence spans 107 residues: Keratin, type I cytoskeletal 20 (107 aa).

The segment at 1–7 (GNLWVGN) is head. The interval 8 to 43 (EKMTMKNLNDRLASYLEKVRSLEQSNSKFELQIKQW) is coil 1A. In terms of domain architecture, IF rod spans 8 to 107 (EKMTMKNLND…ETERGIRLAV (100 aa)). The interval 44-61 (YESNTPGISRDHSAYLQQ) is linker 1. The coil 1B stretch occupies residues 62–107 (IQDLRNQIRDAQLQNARCVLQIDNAKLAAEDFRLKYETERGIRLAV).

The protein belongs to the intermediate filament family. As to quaternary structure, heterotetramer of two type I and two type II keratins. Associates with KRT8.

Its function is as follows. Plays a significant role in maintaining keratin filament organization in intestinal epithelia. When phosphorylated, plays a role in the secretion of mucin in the small intestine. The polypeptide is Keratin, type I cytoskeletal 20 (Sus scrofa (Pig)).